The chain runs to 251 residues: Imidazole glycerol phosphate synthase subunit HisF (251 aa).

Residues aspartate 11 and aspartate 130 contribute to the active site.

This sequence belongs to the HisA/HisF family. In terms of assembly, heterodimer of HisH and HisF.

It localises to the cytoplasm. It carries out the reaction 5-[(5-phospho-1-deoxy-D-ribulos-1-ylimino)methylamino]-1-(5-phospho-beta-D-ribosyl)imidazole-4-carboxamide + L-glutamine = D-erythro-1-(imidazol-4-yl)glycerol 3-phosphate + 5-amino-1-(5-phospho-beta-D-ribosyl)imidazole-4-carboxamide + L-glutamate + H(+). The protein operates within amino-acid biosynthesis; L-histidine biosynthesis; L-histidine from 5-phospho-alpha-D-ribose 1-diphosphate: step 5/9. Its function is as follows. IGPS catalyzes the conversion of PRFAR and glutamine to IGP, AICAR and glutamate. The HisF subunit catalyzes the cyclization activity that produces IGP and AICAR from PRFAR using the ammonia provided by the HisH subunit. This Metallosphaera sedula (strain ATCC 51363 / DSM 5348 / JCM 9185 / NBRC 15509 / TH2) protein is Imidazole glycerol phosphate synthase subunit HisF.